Here is a 324-residue protein sequence, read N- to C-terminus: Glucosyl-3-phosphoglycerate synthase (324 aa).

UDP-alpha-D-glucose contacts are provided by residues 50–54 (PALNE), S81, K114, and 134–135 (DS). D136 contacts Mn(2+). Position 184-187 (184-187 (GRVT)) interacts with (2R)-3-phosphoglycerate. Residues 229-232 (YGVE) and 256-261 (RAHRNR) each bind UDP-alpha-D-glucose. H258 is a Mn(2+) binding site. A (2R)-3-phosphoglycerate-binding site is contributed by N260.

The protein belongs to the glycosyltransferase 2 family. In terms of assembly, homotrimer. Requires Mg(2+) as cofactor. It depends on Mn(2+) as a cofactor.

It catalyses the reaction an NDP-alpha-D-glucose + (2R)-3-phosphoglycerate = (2R)-2-O-(alpha-D-glucopyranosyl)-3-phospho-glycerate + a ribonucleoside 5'-diphosphate + H(+). The catalysed reaction is (2R)-3-phosphoglycerate + UDP-alpha-D-glucose = (2R)-2-O-(alpha-D-glucopyranosyl)-3-phospho-glycerate + UDP + H(+). It carries out the reaction ADP-alpha-D-glucose + (2R)-3-phosphoglycerate = (2R)-2-O-(alpha-D-glucopyranosyl)-3-phospho-glycerate + ADP + H(+). The enzyme catalyses GDP-D-glucose + (2R)-3-phosphoglycerate = (2R)-2-O-(alpha-D-glucopyranosyl)-3-phospho-glycerate + GDP + H(+). Functionally, involved in the biosynthesis of 6-O-methylglucose lipopolysaccarides (MGLPs). Catalyzes the transfer of the glucose moiety from a nuleotide sugar such as UDP-alpha-D-glucose to the position 2 of 3-phospho-D-glycerate (3-PGA) to form glucosyl-3-phosphoglycerate (GPG). It can use UDP-glucose, ADP-glucose and GDP-glucose as sugar donor substrates with decreasing affinity and with 3-PGA as an acceptor. D-glycerate can only be an acceptor with ADP-glucose and at a very low rate. The polypeptide is Glucosyl-3-phosphoglycerate synthase (gpgS) (Mycobacterium bovis (strain ATCC BAA-935 / AF2122/97)).